The chain runs to 518 residues: Ribonuclease Y (518 aa).

Residues 2–22 (GSIIISALLALVIGAVVGFFV) form a helical membrane-spanning segment. A KH domain is found at 208–271 (TVSVVNLPND…ETARIALDKL (64 aa)). One can recognise an HD domain in the interval 334–427 (VLKHSVEVAF…VAAADALSAA (94 aa)).

The protein belongs to the RNase Y family.

The protein resides in the cell membrane. In terms of biological role, endoribonuclease that initiates mRNA decay. The protein is Ribonuclease Y of Geobacillus kaustophilus (strain HTA426).